We begin with the raw amino-acid sequence, 299 residues long: Putative hydrolase YtaP (299 aa).

Belongs to the dienelactone hydrolase family.

The sequence is that of Putative hydrolase YtaP (ytaP) from Bacillus subtilis (strain 168).